Consider the following 67-residue polypeptide: DNA-directed RNA polymerase subunit omega (67 aa).

The protein belongs to the RNA polymerase subunit omega family. As to quaternary structure, the RNAP catalytic core consists of 2 alpha, 1 beta, 1 beta' and 1 omega subunit. When a sigma factor is associated with the core the holoenzyme is formed, which can initiate transcription.

The catalysed reaction is RNA(n) + a ribonucleoside 5'-triphosphate = RNA(n+1) + diphosphate. In terms of biological role, promotes RNA polymerase assembly. Latches the N- and C-terminal regions of the beta' subunit thereby facilitating its interaction with the beta and alpha subunits. The chain is DNA-directed RNA polymerase subunit omega from Listeria welshimeri serovar 6b (strain ATCC 35897 / DSM 20650 / CCUG 15529 / CIP 8149 / NCTC 11857 / SLCC 5334 / V8).